Consider the following 324-residue polypeptide: Corticotropin-releasing factor-binding protein (324 aa).

The first 23 residues, 1–23 (MAPTLKLQCHFILVCLLALRGES), serve as a signal peptide directing secretion. 5 cysteine pairs are disulfide-bonded: Cys62-Cys83, Cys106-Cys143, Cys185-Cys207, Cys239-Cys266, and Cys279-Cys320. Asn206 carries N-linked (GlcNAc...) asparagine glycosylation.

This sequence belongs to the CRF-binding protein family.

Its subcellular location is the secreted. In terms of biological role, binds CRF and inactivates it. May prevent inappropriate pituitary-adrenal stimulation in pregnancy. This chain is Corticotropin-releasing factor-binding protein (CRHBP), found in Ovis aries (Sheep).